The sequence spans 147 residues: Putative pre-16S rRNA nuclease (147 aa).

Belongs to the YqgF nuclease family.

It is found in the cytoplasm. Functionally, could be a nuclease involved in processing of the 5'-end of pre-16S rRNA. This Ureaplasma parvum serovar 3 (strain ATCC 27815 / 27 / NCTC 11736) protein is Putative pre-16S rRNA nuclease.